A 111-amino-acid polypeptide reads, in one-letter code: Nucleoid-associated protein CYA_1369 (111 aa).

Belongs to the YbaB/EbfC family. In terms of assembly, homodimer.

The protein resides in the cytoplasm. It localises to the nucleoid. Binds to DNA and alters its conformation. May be involved in regulation of gene expression, nucleoid organization and DNA protection. This chain is Nucleoid-associated protein CYA_1369, found in Synechococcus sp. (strain JA-3-3Ab) (Cyanobacteria bacterium Yellowstone A-Prime).